Here is a 345-residue protein sequence, read N- to C-terminus: D-erythrose-4-phosphate dehydrogenase (345 aa).

11–12 (RI) lines the NAD(+) pocket. Substrate is bound by residues 158 to 160 (SCT), arginine 204, 217 to 218 (TK), and arginine 240. The Nucleophile role is filled by cysteine 159. Asparagine 322 provides a ligand contact to NAD(+).

Belongs to the glyceraldehyde-3-phosphate dehydrogenase family. Epd subfamily. Homotetramer.

The protein localises to the cytoplasm. The enzyme catalyses D-erythrose 4-phosphate + NAD(+) + H2O = 4-phospho-D-erythronate + NADH + 2 H(+). Its pathway is cofactor biosynthesis; pyridoxine 5'-phosphate biosynthesis; pyridoxine 5'-phosphate from D-erythrose 4-phosphate: step 1/5. Catalyzes the NAD-dependent conversion of D-erythrose 4-phosphate to 4-phosphoerythronate. This is D-erythrose-4-phosphate dehydrogenase from Vibrio campbellii (strain ATCC BAA-1116).